Reading from the N-terminus, the 342-residue chain is Tetraacyldisaccharide 4'-kinase (342 aa).

Residue 68–75 participates in ATP binding; the sequence is TVGGTGKT.

It belongs to the LpxK family.

The catalysed reaction is a lipid A disaccharide + ATP = a lipid IVA + ADP + H(+). It participates in glycolipid biosynthesis; lipid IV(A) biosynthesis; lipid IV(A) from (3R)-3-hydroxytetradecanoyl-[acyl-carrier-protein] and UDP-N-acetyl-alpha-D-glucosamine: step 6/6. Transfers the gamma-phosphate of ATP to the 4'-position of a tetraacyldisaccharide 1-phosphate intermediate (termed DS-1-P) to form tetraacyldisaccharide 1,4'-bis-phosphate (lipid IVA). This chain is Tetraacyldisaccharide 4'-kinase, found in Burkholderia ambifaria (strain ATCC BAA-244 / DSM 16087 / CCUG 44356 / LMG 19182 / AMMD) (Burkholderia cepacia (strain AMMD)).